Reading from the N-terminus, the 298-residue chain is N-acetylmuramic acid 6-phosphate etherase (298 aa).

The 164-residue stretch at isoleucine 55–lysine 218 folds into the SIS domain. Glutamate 83 serves as the catalytic Proton donor. Glutamate 114 is an active-site residue.

Belongs to the GCKR-like family. MurNAc-6-P etherase subfamily. In terms of assembly, homodimer.

It catalyses the reaction N-acetyl-D-muramate 6-phosphate + H2O = N-acetyl-D-glucosamine 6-phosphate + (R)-lactate. It functions in the pathway amino-sugar metabolism; 1,6-anhydro-N-acetylmuramate degradation. Its pathway is amino-sugar metabolism; N-acetylmuramate degradation. It participates in cell wall biogenesis; peptidoglycan recycling. Its function is as follows. Specifically catalyzes the cleavage of the D-lactyl ether substituent of MurNAc 6-phosphate, producing GlcNAc 6-phosphate and D-lactate. Together with AnmK, is also required for the utilization of anhydro-N-acetylmuramic acid (anhMurNAc) either imported from the medium or derived from its own cell wall murein, and thus plays a role in cell wall recycling. The chain is N-acetylmuramic acid 6-phosphate etherase from Escherichia coli O6:K15:H31 (strain 536 / UPEC).